A 542-amino-acid chain; its full sequence is 1-aminocyclopropane-1-carboxylate synthase 6 (542 aa).

The disordered stretch occupies residues 1–28; the sequence is MRRSGNGGAAKKKKKRSASAASERRPRA. Lys379 carries the N6-(pyridoxal phosphate)lysine modification.

This sequence belongs to the class-I pyridoxal-phosphate-dependent aminotransferase family. It depends on pyridoxal 5'-phosphate as a cofactor. Expressed in leaves.

It is found in the plastid. It localises to the amyloplast membrane. It catalyses the reaction S-adenosyl-L-methionine = 1-aminocyclopropane-1-carboxylate + S-methyl-5'-thioadenosine + H(+). It functions in the pathway alkene biosynthesis; ethylene biosynthesis via S-adenosyl-L-methionine; ethylene from S-adenosyl-L-methionine: step 1/2. Functionally, catalyzes the formation of 1-aminocyclopropane-1-carboxylate, a direct precursor of ethylene in higher plants. Required for the regulation of starch grain size in endosperm. This Oryza sativa subsp. japonica (Rice) protein is 1-aminocyclopropane-1-carboxylate synthase 6.